The chain runs to 488 residues: GTPase Der (488 aa).

2 consecutive EngA-type G domains span residues 3–166 (PVVA…AEAM) and 199–372 (IKLA…DSAT). GTP-binding positions include 9 to 16 (GRPNVGKS), 56 to 60 (DTGGI), 118 to 121 (NKVD), 205 to 212 (GKPNVGKS), 252 to 256 (DTAGV), and 317 to 320 (NKWD). A KH-like domain is found at 373 to 457 (RRVSTSMLTR…PIQLRFQEGD (85 aa)). A disordered region spans residues 469–488 (MSQERRRKRALSHIKDRKTK). A compositionally biased stretch (basic residues) spans 473–488 (RRRKRALSHIKDRKTK).

It belongs to the TRAFAC class TrmE-Era-EngA-EngB-Septin-like GTPase superfamily. EngA (Der) GTPase family. Associates with the 50S ribosomal subunit.

GTPase that plays an essential role in the late steps of ribosome biogenesis. This chain is GTPase Der, found in Shewanella putrefaciens (strain CN-32 / ATCC BAA-453).